Consider the following 541-residue polypeptide: MSPSKVYQTPEEKIRAELGLSSGVLTIRRNAPAAVLYEDALAERKTAISSTGALIAYSGEKTGRSPKDKRIVDEPTSSDNIWWGPVNRKASEKTWLINRERAADFLRTREHLYIVDAYAGWDPRYRIKIRIVCCRAYHALFMTNMLIRPTEEELAEFGEPDFTVWNAGQFPANTHTEGMSSKTTVEINFRAMEMVILGTEYAGEMKKGIFTVMFYLMPINHNVLTLHSSANQGPNNDVTLFFGLSGTGKTTLSADQHRKLIGDDEHCWSDYGVFNIEGGCYAKCIGLSGEKEPEIFNAIKYGSVLENVVYDPVTRVVDYEDSSITENTRCAYPIEYIPSAQIPCLSENHPSNIVLLTCDASGVLPPVSRLTPEQVMYHFISGYTSKMAGTEQGVTEPEATFSSCFGQPFLALHPMKYATMLAEKMSQHNASAWLINTGWTGSSYTAGGKRCPLKYTRAILDSIHDGTLAQAEYETLPVFGLSIPKAVEGVPAELLNPAKNWVEGEGKYASAVSALASKFTENFKIYQDQATEEVVRAGPQI.

243 to 250 (GLSGTGKT) is a binding site for ATP.

This sequence belongs to the phosphoenolpyruvate carboxykinase (ATP) family.

The enzyme catalyses oxaloacetate + ATP = phosphoenolpyruvate + ADP + CO2. The protein operates within carbohydrate biosynthesis; gluconeogenesis. The polypeptide is Phosphoenolpyruvate carboxykinase (ATP) (PCK1) (Eremothecium gossypii (strain ATCC 10895 / CBS 109.51 / FGSC 9923 / NRRL Y-1056) (Yeast)).